A 200-amino-acid polypeptide reads, in one-letter code: GTP cyclohydrolase-2 (200 aa).

50 to 54 (RVHSE) serves as a coordination point for GTP. Residues cysteine 55, cysteine 66, and cysteine 68 each contribute to the Zn(2+) site. GTP contacts are provided by residues glutamine 71, 93 to 95 (EGR), and threonine 115. Aspartate 127 functions as the Proton acceptor in the catalytic mechanism. Arginine 129 functions as the Nucleophile in the catalytic mechanism. Positions 150 and 155 each coordinate GTP.

This sequence belongs to the GTP cyclohydrolase II family. The cofactor is Zn(2+).

The enzyme catalyses GTP + 4 H2O = 2,5-diamino-6-hydroxy-4-(5-phosphoribosylamino)-pyrimidine + formate + 2 phosphate + 3 H(+). It participates in cofactor biosynthesis; riboflavin biosynthesis; 5-amino-6-(D-ribitylamino)uracil from GTP: step 1/4. Its function is as follows. Catalyzes the conversion of GTP to 2,5-diamino-6-ribosylamino-4(3H)-pyrimidinone 5'-phosphate (DARP), formate and pyrophosphate. This is GTP cyclohydrolase-2 from Acinetobacter baumannii (strain AB307-0294).